Here is a 437-residue protein sequence, read N- to C-terminus: MIDYSAILNRYRPDEQELQKLKSISEYLTTRASEICRHKNIRADPVLVGSYAKGTNLKDGDLDLFIAFDRDYEEKIMEKLGLSIGHDLLPNGKEKYAEHPYVSGEIDGIKIDVVPCFKMEFGQKKISAVDRTLLHTRYVNEKLDGASKDQVRLLKVFMKSVGVYGAEARTYGFSGYLCELLIIRYGNFENVLRLFSTTRGRLKIDDDERFEDPMVLIDPVDPDRNVASAVSLESLSRMRIASKMFLDNPSESFFDLERKPIKPKYHDRGTCIRIYSIEKPDLTDDVLYPQIYKFKLALLRLMEEYNMEPVGSAIDVADRIYVLIETRKFISDSIRIHVGPPADTSNSIDFIKKWLTRERSRGPYLVGNRLYVDTVEERKTPEEIVLSNISKYSIGKNLDKLKNTIKVQKFEEIKGRIRVLDRFFSEEAFGGLNSLSA.

ATP-binding residues include serine 50 and lysine 53. CTP contacts are provided by serine 50 and lysine 53. 3 residues coordinate Mg(2+): aspartate 61, aspartate 63, and aspartate 112. The ATP site is built by histidine 135, lysine 155, and tyrosine 164. CTP contacts are provided by histidine 135, lysine 155, and tyrosine 164.

It belongs to the tRNA nucleotidyltransferase/poly(A) polymerase family. Archaeal CCA-adding enzyme subfamily. In terms of assembly, homodimer. It depends on Mg(2+) as a cofactor.

It catalyses the reaction a tRNA precursor + 2 CTP + ATP = a tRNA with a 3' CCA end + 3 diphosphate. The enzyme catalyses a tRNA with a 3' CCA end + 2 CTP + ATP = a tRNA with a 3' CCACCA end + 3 diphosphate. Functionally, catalyzes the addition and repair of the essential 3'-terminal CCA sequence in tRNAs without using a nucleic acid template. Adds these three nucleotides in the order of C, C, and A to the tRNA nucleotide-73, using CTP and ATP as substrates and producing inorganic pyrophosphate. tRNA 3'-terminal CCA addition is required both for tRNA processing and repair. Also involved in tRNA surveillance by mediating tandem CCA addition to generate a CCACCA at the 3' terminus of unstable tRNAs. While stable tRNAs receive only 3'-terminal CCA, unstable tRNAs are marked with CCACCA and rapidly degraded. The sequence is that of CCA-adding enzyme from Thermoplasma volcanium (strain ATCC 51530 / DSM 4299 / JCM 9571 / NBRC 15438 / GSS1).